The sequence spans 221 residues: MSGWADERGGEGDGRIYVGNLPTDVREKDLEDLFYKYGRIREIELKNRHGLVPFAFVRFEDPRDAEDAIYGRNGYDYGQCRLRVEFPRAYGGRGGWPRASRNGPPTRRSDFRVLVSGLPPSGSWQDLKDHMREAGDVCYADVQKDGMGMVEYLRKEDMEYALRKLDDTKFRSHEGETSYIRVYPERGTSYGCSRSRSGSRGRDSPYQSRGSPHYFSPFRPY.

RRM domains lie at 14–89 (GRIY…FPRA) and 111–187 (FRVL…PERG). Residue Lys36 forms a Glycyl lysine isopeptide (Lys-Gly) (interchain with G-Cter in SUMO2) linkage. The span at 187-198 (GTSYGCSRSRSG) shows a compositional bias: low complexity. The disordered stretch occupies residues 187–221 (GTSYGCSRSRSGSRGRDSPYQSRGSPHYFSPFRPY). The interaction with SAFB1 stretch occupies residues 188 to 200 (TSYGCSRSRSGSR). Phosphoserine is present on residues Ser189, Ser193, Ser195, Ser204, Ser208, and Ser211. A Phosphotyrosine modification is found at Tyr214. Ser216 is modified (phosphoserine).

Belongs to the splicing factor SR family. In terms of assembly, interacts with KHDRBS3. Interacts with HABP4. Interacts with NOL3/ARC/NOP30. Interacts with NSEP1/YB-1/YB1. Interacts with SAFB/SAFB1. Interacts with SRSF6/SFRS6. Interacts with TRA2B/SFRS10. Interacts with C1QBP. May also interact with DUSP11/PIR1. Post-translationally, extensively phosphorylated on serine residues in the RS domain.

Its subcellular location is the nucleus. In terms of biological role, plays a role in constitutive splicing and can modulate the selection of alternative splice sites. Represses the splicing of MAPT/Tau exon 10. This chain is Serine/arginine-rich splicing factor 9 (Srsf9), found in Rattus norvegicus (Rat).